A 154-amino-acid chain; its full sequence is Fimbrial protein (154 aa).

Residues 1–6 (MNAQKG) constitute a propeptide, leader sequence. Position 7 is an N-methylphenylalanine (Phe-7). Residues 7 to 29 (FTLIELMIVIAIIGILAAIALPA) traverse the membrane as a helical segment.

It belongs to the N-Me-Phe pilin family. In terms of assembly, the pili are polar flexible filaments of about 5.4 nanometers diameter and 2.5 micrometers average length; they consist of only a single polypeptide chain arranged in a helical configuration of five subunits per turn in the assembled pilus.

It is found in the fimbrium. The protein localises to the membrane. In Moraxella nonliquefaciens, this protein is Fimbrial protein (tfpA).